We begin with the raw amino-acid sequence, 168 residues long: Photosystem I assembly protein Ycf3 (168 aa).

3 TPR repeats span residues 35–68 (AFTYYRDGMSAQSEGNYAEALQNYYEAMRLEIDP), 72–105 (SYILYNIGLIHTSNGEHTKALEYYFRALERNPFL), and 120–153 (GEQAIRQGDSEVAESWFNQAAEYWKQAIALTPGN).

This sequence belongs to the Ycf3 family.

It localises to the plastid. The protein resides in the chloroplast thylakoid membrane. Essential for the assembly of the photosystem I (PSI) complex. May act as a chaperone-like factor to guide the assembly of the PSI subunits. The protein is Photosystem I assembly protein Ycf3 of Phaseolus vulgaris (Kidney bean).